We begin with the raw amino-acid sequence, 135 residues long: MDERILEFIKNEQLLSWAMIDEKGVYTASAFYAFDEKNLAFIIASHEDTKHIRLASENSSIALNIAKESKIAFLKGVQAKAEFKMASKEQMKIYFSKFPFAKFDKSAKIYALELFWLKFTNNALGLSKKLEFYKK.

It belongs to the UPF0306 family.

The protein is UPF0306 protein C8J_1355 of Campylobacter jejuni subsp. jejuni serotype O:6 (strain 81116 / NCTC 11828).